Reading from the N-terminus, the 288-residue chain is Protein PXR1 (288 aa).

Residues 25 to 72 enclose the G-patch domain; it reads QSRFGHKHLMRFGWQPGQGLGTQPVQSMKTHIKVSIKDDNLGLGAKLK. The interval 147–258 is disordered; that stretch reads SYSQMEKDSS…TSIPESVSTR (112 aa). Positions 157 to 166 are enriched in acidic residues; sequence SDEESDDDED. Basic residues-rich tracts occupy residues 169 to 185 and 195 to 214; these read KKHK…KKRK and KKKK…KDKK. Residues 238–256 show a composition bias toward low complexity; the sequence is RTASIESSTSATSIPESVS.

The protein belongs to the PINX1 family.

The protein resides in the nucleus. Its subcellular location is the nucleolus. Its function is as follows. Involved in rRNA-processing at A0, A1 and A2 sites and negatively regulates telomerase. In Candida glabrata (strain ATCC 2001 / BCRC 20586 / JCM 3761 / NBRC 0622 / NRRL Y-65 / CBS 138) (Yeast), this protein is Protein PXR1 (PXR1).